The sequence spans 271 residues: Formamidopyrimidine-DNA glycosylase (271 aa).

The active-site Schiff-base intermediate with DNA is the proline 2. The Proton donor role is filled by glutamate 3. Catalysis depends on lysine 58, which acts as the Proton donor; for beta-elimination activity. Positions 91, 110, and 152 each coordinate DNA. The segment at 237 to 271 (SIYGKKGRPCPKCGSAIRMMRLGGRSTFFCPLCQK) adopts an FPG-type zinc-finger fold. Residue arginine 261 is the Proton donor; for delta-elimination activity of the active site.

The protein belongs to the FPG family. Monomer. Requires Zn(2+) as cofactor.

The enzyme catalyses Hydrolysis of DNA containing ring-opened 7-methylguanine residues, releasing 2,6-diamino-4-hydroxy-5-(N-methyl)formamidopyrimidine.. It catalyses the reaction 2'-deoxyribonucleotide-(2'-deoxyribose 5'-phosphate)-2'-deoxyribonucleotide-DNA = a 3'-end 2'-deoxyribonucleotide-(2,3-dehydro-2,3-deoxyribose 5'-phosphate)-DNA + a 5'-end 5'-phospho-2'-deoxyribonucleoside-DNA + H(+). Functionally, involved in base excision repair of DNA damaged by oxidation or by mutagenic agents. Acts as a DNA glycosylase that recognizes and removes damaged bases. Has a preference for oxidized purines, such as 7,8-dihydro-8-oxoguanine (8-oxoG). Has AP (apurinic/apyrimidinic) lyase activity and introduces nicks in the DNA strand. Cleaves the DNA backbone by beta-delta elimination to generate a single-strand break at the site of the removed base with both 3'- and 5'-phosphates. The polypeptide is Formamidopyrimidine-DNA glycosylase (Geotalea daltonii (strain DSM 22248 / JCM 15807 / FRC-32) (Geobacter daltonii)).